A 363-amino-acid chain; its full sequence is UDP-N-acetylglucosamine--N-acetylmuramyl-(pentapeptide) pyrophosphoryl-undecaprenol N-acetylglucosamine transferase (363 aa).

UDP-N-acetyl-alpha-D-glucosamine contacts are provided by residues 10–12 (TGG), N124, S195, I250, and Q295.

It belongs to the glycosyltransferase 28 family. MurG subfamily.

It is found in the cell membrane. It catalyses the reaction di-trans,octa-cis-undecaprenyl diphospho-N-acetyl-alpha-D-muramoyl-L-alanyl-D-glutamyl-meso-2,6-diaminopimeloyl-D-alanyl-D-alanine + UDP-N-acetyl-alpha-D-glucosamine = di-trans,octa-cis-undecaprenyl diphospho-[N-acetyl-alpha-D-glucosaminyl-(1-&gt;4)]-N-acetyl-alpha-D-muramoyl-L-alanyl-D-glutamyl-meso-2,6-diaminopimeloyl-D-alanyl-D-alanine + UDP + H(+). The protein operates within cell wall biogenesis; peptidoglycan biosynthesis. Functionally, cell wall formation. Catalyzes the transfer of a GlcNAc subunit on undecaprenyl-pyrophosphoryl-MurNAc-pentapeptide (lipid intermediate I) to form undecaprenyl-pyrophosphoryl-MurNAc-(pentapeptide)GlcNAc (lipid intermediate II). The sequence is that of UDP-N-acetylglucosamine--N-acetylmuramyl-(pentapeptide) pyrophosphoryl-undecaprenol N-acetylglucosamine transferase from Halalkalibacterium halodurans (strain ATCC BAA-125 / DSM 18197 / FERM 7344 / JCM 9153 / C-125) (Bacillus halodurans).